Consider the following 387-residue polypeptide: NADPH-dependent aldehyde reductase YqhD (387 aa).

G38, S40, N68, G95, S96, D99, T138, N147, G149, K160, Y179, and T182 together coordinate NADP(+). Zn(2+) is bound by residues D194, H198, H267, and H281.

The protein belongs to the iron-containing alcohol dehydrogenase family. As to quaternary structure, homodimer. The crystals contain two dimers in the asymmetric unit. Zn(2+) is required as a cofactor.

It catalyses the reaction a primary alcohol + NADP(+) = an aldehyde + NADPH + H(+). The catalysed reaction is butan-1-ol + NADP(+) = butanal + NADPH + H(+). It carries out the reaction 1-propanol + NADP(+) = propanal + NADPH + H(+). The enzyme catalyses allyl alcohol + NADP(+) = acrolein + NADPH + H(+). Exhibits NADPH-dependent reductase activity for a broad range of short-chain aldehydes. Shows highest catalytic efficiency toward butanal, propanal and the highly toxic aldehydes acrolein and malondialdehyde (MDA), which are produced mainly during lipid peroxidation. Mediates resistance to reactive oxygen species (ROS) elicitors, such as paraquat and potassium tellurite, probably by protecting the cell against the toxic effects of reactive aldehydes derived from membrane lipid peroxidation. Also acts, with lower efficiency, on acetaldehyde, glyceraldehyde, glycolaldehyde, methylglyoxal, glyoxal and hydroxyacetone. Could be involved in glyoxal metabolism, by catalyzing the reduction of glyoxal to glycolaldehyde, and further to 1,2-ethandiol. Catalyzes the reduction of isobutyraldehyde (2-methylpropanal) to isobutanol, and probably contributes to the production of isobutanol. Can probably catalyze the reduction of glutaraldehyde, a widely used biocide, to 1,5-pentanediol, which is non-toxic. Overexpression of YqhD protects the cells against glutaraldehyde toxicity. Can catalyze in vitro the NADPH-dependent reduction of furfural, a natural product of lignocellulosic decomposition, to the less toxic product, furfuryl alcohol. However, it is unlikely that furfural is a physiological substrate. Functionally, in contrast, Sulzenbacher et al. detected significant activities only in the presence of alcohol and NADP(+). They reported in vitro NADP(+)-dependent alcohol dehydrogenase (ADH) activity towards various alcohols, with a preference for alcohols longer than C(3), but the affinity for the substrates is poor, suggesting that these compounds are not the physiological substrates. Perez et al. did not detect dehydrogenase activity with short and medium chain alcohols such as methanol, ethanol, propanol, butanol or isopropanol. This is NADPH-dependent aldehyde reductase YqhD (yqhD) from Escherichia coli (strain K12).